The following is a 320-amino-acid chain: Cytochrome f (320 aa).

A signal peptide spans 1–35 (MQTRNTFSSIKEEITRSISVSLMIYIITWAPVSNA). Heme-binding residues include Y36, C56, C59, and H60. Residues 286-306 (VQGLLFFFASVILAQIFLVLK) traverse the membrane as a helical segment.

Belongs to the cytochrome f family. In terms of assembly, the 4 large subunits of the cytochrome b6-f complex are cytochrome b6, subunit IV (17 kDa polypeptide, petD), cytochrome f and the Rieske protein, while the 4 small subunits are PetG, PetL, PetM and PetN. The complex functions as a dimer. Heme serves as cofactor.

Its subcellular location is the plastid. It localises to the chloroplast thylakoid membrane. Component of the cytochrome b6-f complex, which mediates electron transfer between photosystem II (PSII) and photosystem I (PSI), cyclic electron flow around PSI, and state transitions. In Cucumis sativus (Cucumber), this protein is Cytochrome f.